A 118-amino-acid chain; its full sequence is Protein TusC (118 aa).

This sequence belongs to the DsrF/TusC family. Heterohexamer, formed by a dimer of trimers. The hexameric TusBCD complex contains 2 copies each of TusB, TusC and TusD. The TusBCD complex interacts with TusE.

The protein resides in the cytoplasm. In terms of biological role, part of a sulfur-relay system required for 2-thiolation of 5-methylaminomethyl-2-thiouridine (mnm(5)s(2)U) at tRNA wobble positions. The protein is Protein TusC of Salmonella gallinarum (strain 287/91 / NCTC 13346).